The following is a 294-amino-acid chain: MKRKWERDLGLQGRMLFTMFLLAAVYLFFLAFLSYYGTSQIFIILFIGLFMAAQYFYSDKMVLWTTGAQIVSESEAPQLHGMITRLCAIADLPKPQVAIVRTQVPNAFATGRNQNKAVVAVTTGLMDKLSPAELEAVLAHELSHVKNRDMAVLTIASFLSSVAFYIVRYSLYFGNMGGGRRKEGGGIMLVWLVSIVVWIVSFLLIRALSRYREFSADRGAAVITGQPANLASALMKISGVMDRVPGDDLRKVEGMNAFFIIPAISGSSIMDIFSTHPSVEKRIAKLEKMQQEMS.

The next 2 membrane-spanning stretches (helical) occupy residues 15-35 (MLFT…FLSY) and 36-56 (YGTS…AQYF). Position 140 (histidine 140) interacts with Zn(2+). Glutamate 141 is a catalytic residue. A Zn(2+)-binding site is contributed by histidine 144. 2 helical membrane passes run 151–171 (AVLT…RYSL) and 185–205 (GGIM…FLLI). Glutamate 213 provides a ligand contact to Zn(2+).

This sequence belongs to the peptidase M48B family. Zn(2+) is required as a cofactor.

It is found in the cell membrane. The protein is Protease HtpX homolog 2 of Methanosarcina mazei (strain ATCC BAA-159 / DSM 3647 / Goe1 / Go1 / JCM 11833 / OCM 88) (Methanosarcina frisia).